The chain runs to 101 residues: Small ribosomal subunit protein bS18c (101 aa).

The protein belongs to the bacterial ribosomal protein bS18 family. In terms of assembly, part of the 30S ribosomal subunit.

It is found in the plastid. The protein localises to the chloroplast. The sequence is that of Small ribosomal subunit protein bS18c from Populus alba (White poplar).